The primary structure comprises 137 residues: Endoribonuclease YbeY (137 aa).

Residues His-105, His-109, and Asp-115 each contribute to the Zn(2+) site.

The protein belongs to the endoribonuclease YbeY family. It depends on Zn(2+) as a cofactor.

It localises to the cytoplasm. In terms of biological role, single strand-specific metallo-endoribonuclease involved in late-stage 70S ribosome quality control and in maturation of the 3' terminus of the 16S rRNA. The sequence is that of Endoribonuclease YbeY from Chlorobium luteolum (strain DSM 273 / BCRC 81028 / 2530) (Pelodictyon luteolum).